The sequence spans 146 residues: Large ribosomal subunit protein uL15 (146 aa).

Residues 1–51 (MQLNTIKPAEGSKKNRRHVGRGIGSGLGKTAGRGHKGQKSRSGGFHKVGFE) are disordered. Residues 21–31 (RGIGSGLGKTA) are compositionally biased toward gly residues.

This sequence belongs to the universal ribosomal protein uL15 family. In terms of assembly, part of the 50S ribosomal subunit.

Functionally, binds to the 23S rRNA. The chain is Large ribosomal subunit protein uL15 from Polynucleobacter necessarius subsp. necessarius (strain STIR1).